The chain runs to 86 residues: Large ribosomal subunit protein bL27 (86 aa).

A compositionally biased stretch (gly residues) spans 1–10 (MAQKKGGGST). The disordered stretch occupies residues 1-20 (MAQKKGGGSTRNGRDSESKR).

The protein belongs to the bacterial ribosomal protein bL27 family.

The chain is Large ribosomal subunit protein bL27 from Bordetella avium (strain 197N).